The primary structure comprises 249 residues: uncharacterized protein (249 aa).

Residues 4-71 (VRINKFLSEA…RKRYIILNKP (68 aa)) enclose the S4 RNA-binding domain. Asp-106 serves as the catalytic Nucleophile.

The protein belongs to the pseudouridine synthase RsuA family.

It carries out the reaction a uridine in RNA = a pseudouridine in RNA. This is an uncharacterized protein from Aquifex aeolicus (strain VF5).